We begin with the raw amino-acid sequence, 1254 residues long: DNA-directed RNA polymerase subunit beta (1254 aa).

It belongs to the RNA polymerase beta chain family. As to quaternary structure, the RNAP catalytic core consists of 2 alpha, 1 beta, 1 beta' and 1 omega subunit. When a sigma factor is associated with the core the holoenzyme is formed, which can initiate transcription.

It catalyses the reaction RNA(n) + a ribonucleoside 5'-triphosphate = RNA(n+1) + diphosphate. Functionally, DNA-dependent RNA polymerase catalyzes the transcription of DNA into RNA using the four ribonucleoside triphosphates as substrates. This Protochlamydia amoebophila (strain UWE25) protein is DNA-directed RNA polymerase subunit beta.